The sequence spans 182 residues: Phospholipase A2 inhibitor gamma subunit A (182 aa).

8 disulfides stabilise this stretch: Cys-3/Cys-27, Cys-6/Cys-13, Cys-20/Cys-48, Cys-54/Cys-75, Cys-76/Cys-81, Cys-99/Cys-124, Cys-117/Cys-146, and Cys-150/Cys-172. N-linked (GlcNAc...) asparagine glycosylation is present at Asn-157.

This sequence belongs to the CNF-like-inhibitor family. In terms of assembly, heterotrimer of 2 subunits A and 1 subunit B. Post-translationally, N-glycosylation is not important for activity, since deglycosylation does not change its PLA2 inhibitory activity. As to expression, expressed by the liver.

It localises to the secreted. Functionally, strongly inhibits its own venom PLA2 and all other PLA2s tested including Elapid, Crotalid and Viperid venom PLA2s, as well as honeybee PLA2s. The sequence is that of Phospholipase A2 inhibitor gamma subunit A from Laticauda semifasciata (Black-banded sea krait).